Here is a 469-residue protein sequence, read N- to C-terminus: UTP--glucose-1-phosphate uridylyltransferase 2 (469 aa).

Residue alanine 2 is modified to N-acetylalanine. Residues leucine 85–glycine 88, lysine 99, glutamine 162, and glycine 191 contribute to the UTP site. Residue glycine 87–glycine 88 participates in substrate binding. Substrate contacts are provided by residues histidine 192 and asparagine 220–aspartate 222. UTP is bound by residues aspartate 222 and lysine 360.

The protein belongs to the UDPGP type 1 family. As to expression, expressed in cauline leaves, flowers and siliques.

The protein resides in the cytoplasm. The enzyme catalyses alpha-D-glucose 1-phosphate + UTP + H(+) = UDP-alpha-D-glucose + diphosphate. Its function is as follows. Converts glucose 1-phosphate to UDP-glucose, which is the major glycosyl donor for polysaccharides. Acts redundantly with UGP1 and is essential for the synthesis of sucrose, starch and cell wall, and callose deposition. The protein is UTP--glucose-1-phosphate uridylyltransferase 2 of Arabidopsis thaliana (Mouse-ear cress).